The following is a 239-amino-acid chain: MLEIGFCTLEDQCPYLKDKRSRIEYKYIENCPKEINNELIKRGWRRFGRYFSRPICKDCDECLSLRILVNEYNFSRSERRVVNKNINTKVILRTPNLSNEHLFLYDKYHRFMEEKKNWKRYDLSFKQYYNLYVDGFMNFGYELAFYIEDKLVCVDLIDILEDGISSIYCFYDPDFSYFSLGKFSLLNEIQIAKKMNLDYIYLGYFVKKCQSLSYKADYTPNEILKGTKELFENEVLWEK.

Belongs to the R-transferase family. Bpt subfamily.

It localises to the cytoplasm. It carries out the reaction N-terminal L-glutamyl-[protein] + L-leucyl-tRNA(Leu) = N-terminal L-leucyl-L-glutamyl-[protein] + tRNA(Leu) + H(+). The catalysed reaction is N-terminal L-aspartyl-[protein] + L-leucyl-tRNA(Leu) = N-terminal L-leucyl-L-aspartyl-[protein] + tRNA(Leu) + H(+). Functions in the N-end rule pathway of protein degradation where it conjugates Leu from its aminoacyl-tRNA to the N-termini of proteins containing an N-terminal aspartate or glutamate. In Campylobacter jejuni subsp. jejuni serotype O:2 (strain ATCC 700819 / NCTC 11168), this protein is Aspartate/glutamate leucyltransferase.